Here is a 208-residue protein sequence, read N- to C-terminus: Probable nicotinate-nucleotide adenylyltransferase (208 aa).

This sequence belongs to the NadD family.

The catalysed reaction is nicotinate beta-D-ribonucleotide + ATP + H(+) = deamido-NAD(+) + diphosphate. It participates in cofactor biosynthesis; NAD(+) biosynthesis; deamido-NAD(+) from nicotinate D-ribonucleotide: step 1/1. In terms of biological role, catalyzes the reversible adenylation of nicotinate mononucleotide (NaMN) to nicotinic acid adenine dinucleotide (NaAD). The protein is Probable nicotinate-nucleotide adenylyltransferase of Symbiobacterium thermophilum (strain DSM 24528 / JCM 14929 / IAM 14863 / T).